Here is a 316-residue protein sequence, read N- to C-terminus: Pantothenate kinase (316 aa).

Residue 95-102 (GSVAVGKS) coordinates ATP.

It belongs to the prokaryotic pantothenate kinase family.

Its subcellular location is the cytoplasm. The catalysed reaction is (R)-pantothenate + ATP = (R)-4'-phosphopantothenate + ADP + H(+). The protein operates within cofactor biosynthesis; coenzyme A biosynthesis; CoA from (R)-pantothenate: step 1/5. The chain is Pantothenate kinase from Salmonella choleraesuis (strain SC-B67).